The chain runs to 459 residues: Anthocyanidin 3-O-glucoside 2''-O-glucosyltransferase (459 aa).

His20 functions as the Proton acceptor in the catalytic mechanism. His20 lines the an anthocyanidin pocket. The active-site Charge relay is the Asp117. UDP-alpha-D-glucose-binding residues include Thr138, Val335, Gln337, His352, Trp355, Ser357, and Glu360. Gly375 provides a ligand contact to an anthocyanidin. The UDP-alpha-D-glucose site is built by Asp376 and Gln377.

It belongs to the UDP-glycosyltransferase family. Mainly expressed in the petals and tubes of flower buds at around 24 hours before flower opening.

It catalyses the reaction an anthocyanidin 3-O-beta-D-glucoside + UDP-alpha-D-glucose = an anthocyanidin 3-O-sophoroside + UDP + 2 H(+). Its pathway is pigment biosynthesis; anthocyanin biosynthesis. Glycosyltransferase that mediates the glucosylation of anthocyanidin 3-O-glucosides to yield anthocyanidin 3-O-sophorosides. 3-O-sophoroside derivatives are required for the bright blue or red color of flowers. This Ipomoea nil (Japanese morning glory) protein is Anthocyanidin 3-O-glucoside 2''-O-glucosyltransferase (3GGT).